The following is a 393-amino-acid chain: Formate-dependent phosphoribosylglycinamide formyltransferase (393 aa).

Residues 17–18 (EL) and Glu77 each bind N(1)-(5-phospho-beta-D-ribosyl)glycinamide. Residues Arg109, Lys150, 155–160 (SSGKGQ), 190–193 (EEFL), and Glu198 each bind ATP. Residues 114 to 304 (DLAAGELGLR…EFELHLRAVL (191 aa)) enclose the ATP-grasp domain. 2 residues coordinate Mg(2+): Glu263 and Glu275. Residues Asp282, Lys354, and 361 to 362 (RR) contribute to the N(1)-(5-phospho-beta-D-ribosyl)glycinamide site.

Belongs to the PurK/PurT family. In terms of assembly, homodimer.

It carries out the reaction N(1)-(5-phospho-beta-D-ribosyl)glycinamide + formate + ATP = N(2)-formyl-N(1)-(5-phospho-beta-D-ribosyl)glycinamide + ADP + phosphate + H(+). It participates in purine metabolism; IMP biosynthesis via de novo pathway; N(2)-formyl-N(1)-(5-phospho-D-ribosyl)glycinamide from N(1)-(5-phospho-D-ribosyl)glycinamide (formate route): step 1/1. Involved in the de novo purine biosynthesis. Catalyzes the transfer of formate to 5-phospho-ribosyl-glycinamide (GAR), producing 5-phospho-ribosyl-N-formylglycinamide (FGAR). Formate is provided by PurU via hydrolysis of 10-formyl-tetrahydrofolate. This Synechococcus sp. (strain RCC307) protein is Formate-dependent phosphoribosylglycinamide formyltransferase.